Consider the following 176-residue polypeptide: Large ribosomal subunit protein uL6 (176 aa).

It belongs to the universal ribosomal protein uL6 family. In terms of assembly, part of the 50S ribosomal subunit.

This protein binds to the 23S rRNA, and is important in its secondary structure. It is located near the subunit interface in the base of the L7/L12 stalk, and near the tRNA binding site of the peptidyltransferase center. In Lactobacillus acidophilus (strain ATCC 700396 / NCK56 / N2 / NCFM), this protein is Large ribosomal subunit protein uL6.